The sequence spans 331 residues: 6-phosphogluconolactonase (331 aa).

Position 287 is an N6-acetyllysine (K287).

The protein belongs to the cycloisomerase 2 family.

It catalyses the reaction 6-phospho-D-glucono-1,5-lactone + H2O = 6-phospho-D-gluconate + H(+). It functions in the pathway carbohydrate degradation; pentose phosphate pathway; D-ribulose 5-phosphate from D-glucose 6-phosphate (oxidative stage): step 2/3. Its function is as follows. Catalyzes the hydrolysis of 6-phosphogluconolactone to 6-phosphogluconate. This chain is 6-phosphogluconolactonase, found in Escherichia fergusonii (strain ATCC 35469 / DSM 13698 / CCUG 18766 / IAM 14443 / JCM 21226 / LMG 7866 / NBRC 102419 / NCTC 12128 / CDC 0568-73).